The chain runs to 1699 residues: Genome polyprotein (1699 aa).

Residues 1 to 19 (MKMASNDASAAAVVNSNND) show a composition bias toward low complexity. Residues 1 to 78 (MKMASNDASA…PPPPPNGEDE (78 aa)) form a disordered region. The interaction with host MAP1LC3A/LC3 stretch occupies residues 1-116 (MKMASNDASA…AFSVPPLNQR (116 aa)). Residues 46–74 (QPPPRETPQRPPRPPTPELVKKIPPPPPN) show a composition bias toward pro residues. Positions 117-330 (ENRDAKEPLT…APLLGDYELQ (214 aa)) are interaction with NTPase. The interaction with NS4 stretch occupies residues 233–330 (RPYQDWNRKP…APLLGDYELQ (98 aa)). Host ER membrane association stretches follow at residues 250–281 (KLKK…RPLN) and 292–330 (TFAG…YELQ). The interaction with NS1-2, NS4 and homooligomerization stretch occupies residues 331 to 509 (GPEDLAVELV…GKTHLARELA (179 aa)). One can recognise an SF3 helicase domain in the interval 465-632 (LARIAAARSL…EKAKRDFPGQ (168 aa)). 495-502 (GKPGIGKT) provides a ligand contact to ATP. Residues 586-691 (AIIITTNLAN…ASGLLHERLD (106 aa)) are important for mitochondrion targeting. The interval 764–770 (YTLESDG) is functions as endoplasmic reticulum export signal. The interval 801–850 (RIRYYVKCVQEALYSIIQIAGAAFVTTRIVKRMNIQDLWSKPQVEDTEDT) is host membrane association. Positions 843 to 894 (QVEDTEDTANKDGCPKPKDDEEFVVSSDDIKTEGKKGKNKTGRGKKHTAFSS) are disordered. Residues 850–861 (TANKDGCPKPKD) show a composition bias toward basic and acidic residues. Over residues 879-890 (GKNKTGRGKKHT) the composition is skewed to basic residues. Residues 899–904 (DEEYDE) are acidic. The residue at position 902 (Tyr-902) is an O-(5'-phospho-RNA)-tyrosine. Positions 992–1008 (WADDDRSVDYNEKLDFE) are interaction with host EIF4G. Positions 1009 to 1189 (APPSIWSRIV…QGSEGEATLE (181 aa)) constitute a Peptidase C37 domain. Active-site for 3CLpro activity residues include His-1038, Glu-1062, and Cys-1147. Positions 1425-1546 (KYHYDADYSR…STDINLNPEK (122 aa)) constitute a RdRp catalytic domain. Positions 1429, 1431, 1533, and 1534 each coordinate Mg(2+).

As to quaternary structure, homodimer. Homooligomer. Interacts with NTPase; this interaction increases the proapoptotic activity of the NTPase and is crucial for the formation of the viral replication complex. Interacts with NS4; this interaction is crucial for the formation of the viral replication complex. Interacts (via N-terminus) with host VAPA. Interacts with host MAP1LC3A/LC3; this interaction does not seem to be linked to host autophagy, but rather plays a role in the formation of viral factories. In terms of assembly, homooligomer. Interacts with NS1-2; this interaction increases the proapoptotic activity of the NTPase and is crucial for the formation of the viral replication complex. Interacts with NS4; this interaction increases the proapoptotic activity of the NTPase. Homodimer. Monomer; in solution. As to quaternary structure, interacts with NTPase; this interaction increases the proapoptotic activity of the NTPase. Interacts with NS1-2; this interaction is crucial for the formation of the viral replication complex. In terms of assembly, monomer. Interacts with the RNA-directed RNA polymerase; this interaction induces the multimerization of the RdRp and enhances its activity. Interacts with host IEF4G1; this interaction plays a role in translation of viral proteins. Homohexamer; also forms fibrous hexameric oligomer. Interacts with the viral genome-linked protein; this interaction induces the multimerization of the RdRp and enhances its activity. It depends on Mg(2+) as a cofactor. The cofactor is Mn(2+). Post-translationally, specific enzymatic cleavages in vivo yield mature proteins. 3CLpro is first autocatalytically cleaved, then processes the whole polyprotein. NS1/2-3 and NS3-4 sites are cleaved rapidly and NS4-5, NS5-6, and NS6-7 sites are processed subsequently and less efficiently. VPg is uridylylated by the polymerase and is covalently attached to the 5'-end of the polyadenylated genomic and subgenomic RNAs. This uridylylated form acts as a nucleotide-peptide primer for the polymerase. In terms of processing, cleaved by host CASP3/caspase 3 at 18-22 h.p.i. The cleavage allows NS1 secretion, which is essential for intestinal infection and resistance to IFN-lambda.

It is found in the host endoplasmic reticulum membrane. Its subcellular location is the secreted. The protein localises to the host mitochondrion. The protein resides in the host Golgi apparatus membrane. It localises to the host cytoplasm. It is found in the host perinuclear region. The catalysed reaction is a ribonucleoside 5'-triphosphate + H2O = a ribonucleoside 5'-diphosphate + phosphate + H(+). The enzyme catalyses Endopeptidase with a preference for cleavage when the P1 position is occupied by Glu-|-Xaa and the P1' position is occupied by Gly-|-Yaa.. It carries out the reaction RNA(n) + a ribonucleoside 5'-triphosphate = RNA(n+1) + diphosphate. Functionally, induces the proliferation of the host smooth ER membranes forming long tubular structures. These remodeled membranes probably form the viral factories that contain the replication complex. May play a role in viral replication by interacting with host VAPA, a vesicle-associated membrane protein that plays a role in SNARE-mediated vesicle fusion. This interaction may target replication complex to intracellular membranes. Its function is as follows. Displays NTPase activity, but no helicase activity. Displays RNA chaperone-like activity and destabilizes dsRNA. Induces the formation of convoluted membranes derived from the host ER. These remodeled membranes probably form the viral factories that contain the replication complex. Initiates host cell death by targeting the mitochondrial outer membrane, leading to the permeabilization of mitochondria, programmed host cell death and viral egress. Externalization of host cardiolipin seems to be involved in the process. Probably plays a role in preventing the assembly of host stress granules. In terms of biological role, probable key protein responsible for the formation of membrane alterations by the virus. Induces the formation of convoluted membranes derived from the host ER. These remodeled membranes probably form the viral factories that contain the replication complex. May play a role in targeting replication complex to intracellular membranes. Viral genome-linked protein is covalently linked to the 5'-end of the positive-strand, negative-strand genomic RNAs and subgenomic RNA. Acts as a genome-linked replication primer. May recruit ribosome to viral RNA thereby promoting viral proteins translation. Interacts with host translation initiation complex to allow the translation of viral proteins. Induces the formation of aggregates of RNA-directed RNA polymerase in the presence of RNA. Through its interaction with the viral RNA-directed RNA polymerase, plays a crucial role in enhancing the polymerase activity. Functionally, processes the polyprotein. 3CLpro-RdRp is first released by autocleavage, then all other proteins are cleaved. May cleave polyadenylate-binding protein thereby inhibiting cellular translation. Its function is as follows. Replicates genomic and antigenomic RNA by recognizing replications specific signals. Also transcribes a subgenomic mRNA by initiating RNA synthesis internally on antigenomic RNA. This sgRNA codes for structural proteins. Catalyzes the covalent attachment VPg with viral RNAs. This is Genome polyprotein from Lordsdale virus (strain GII/Human/United Kingdom/Lordsdale/1993) (Human enteric calicivirus).